The sequence spans 133 residues: Holo-[acyl-carrier-protein] synthase (133 aa).

Residues Asp-8 and Glu-56 each contribute to the Mg(2+) site.

Belongs to the P-Pant transferase superfamily. AcpS family. Requires Mg(2+) as cofactor.

It is found in the cytoplasm. The enzyme catalyses apo-[ACP] + CoA = holo-[ACP] + adenosine 3',5'-bisphosphate + H(+). Transfers the 4'-phosphopantetheine moiety from coenzyme A to a Ser of acyl-carrier-protein. The chain is Holo-[acyl-carrier-protein] synthase from Clostridium perfringens (strain ATCC 13124 / DSM 756 / JCM 1290 / NCIMB 6125 / NCTC 8237 / Type A).